The primary structure comprises 215 residues: Fibroblast growth factor 17 (215 aa).

Residues 1 to 22 (MYGINQRYLYISFHFFVVWCHA) form the signal peptide. N-linked (GlcNAc...) asparagine glycosylation is present at Asn137.

The protein belongs to the heparin-binding growth factors family.

It is found in the secreted. Functionally, involved in dorsal-ventral embryonic patterning, by promoting expression of bone morphogenetic protein (BMP) antagonists such as chd. Also involved in anterior-posterior neural patterning and in mesoderm induction. This is Fibroblast growth factor 17 (fgf17) from Danio rerio (Zebrafish).